A 304-amino-acid polypeptide reads, in one-letter code: Glycine--tRNA ligase alpha subunit (304 aa).

This sequence belongs to the class-II aminoacyl-tRNA synthetase family. As to quaternary structure, tetramer of two alpha and two beta subunits.

It is found in the cytoplasm. The catalysed reaction is tRNA(Gly) + glycine + ATP = glycyl-tRNA(Gly) + AMP + diphosphate. This Vibrio atlanticus (strain LGP32) (Vibrio splendidus (strain Mel32)) protein is Glycine--tRNA ligase alpha subunit.